The following is a 194-amino-acid chain: Imidazoleglycerol-phosphate dehydratase (194 aa).

Belongs to the imidazoleglycerol-phosphate dehydratase family.

The protein localises to the cytoplasm. It carries out the reaction D-erythro-1-(imidazol-4-yl)glycerol 3-phosphate = 3-(imidazol-4-yl)-2-oxopropyl phosphate + H2O. It functions in the pathway amino-acid biosynthesis; L-histidine biosynthesis; L-histidine from 5-phospho-alpha-D-ribose 1-diphosphate: step 6/9. The sequence is that of Imidazoleglycerol-phosphate dehydratase from Streptococcus thermophilus (strain ATCC BAA-491 / LMD-9).